The chain runs to 446 residues: Immunoglobulin heavy constant gamma 3 (446 aa).

The CH1 stretch occupies residues 1–98 (ASTKGPSVFP…PSNTKVDKRV (98 aa)). The Extracellular portion of the chain corresponds to 1–397 (ASTKGPSVFP…DGELDGLWTT (397 aa)). Positions 6-99 (PSVFPLAPCS…SNTKVDKRVE (94 aa)) constitute an Ig-like 1 domain. A disulfide bridge links cysteine 27 with cysteine 83. Residues 99-160 (ELKTPLGDTT…DTPPPCPRCP (62 aa)) are hinge. 3 repeats span residues 116–130 (EPKS…PRCP), 131–145 (EPKS…PRCP), and 146–160 (EPKS…PRCP). O-linked (GalNAc...) threonine glycosylation is found at threonine 122, threonine 137, and threonine 152. The CH2 stretch occupies residues 161-270 (APELLGGPSV…PIEKTISKTK (110 aa)). 2 consecutive Ig-like domains span residues 168 to 267 (PSVF…KTIS) and 276 to 372 (PQVY…KSLS). 2 cysteine pairs are disulfide-bonded: cysteine 191/cysteine 251 and cysteine 297/cysteine 355. 2 N-linked (GlcNAc...) asparagine glycosylation sites follow: asparagine 227 and asparagine 322. A CH3 region spans residues 271 to 376 (GQPREPQVYT…TQKSLSLSPE (106 aa)). A helical transmembrane segment spans residues 398–418 (ITIFITLFLLSVCYSATVTFF). Over 419 to 446 (KVKWIFSSVVDLKQTIIPDYRNMIGQGA) the chain is Cytoplasmic.

In terms of assembly, immunoglobulins are composed of two identical heavy chains and two identical light chains; disulfide-linked. In terms of processing, N-linked glycans at Asn-322 are noncore fucosylated and the vast majority are diantennary species with a bisecting GlcNAc. Among them the most dominant glycans are HexNAc5Hex4, HexNAc5Hex5, and HexNAc5Hex5Sia1. N-linked glycans at Asn-227 are diantennary core fucosylated structures without bisecting GlcNAc (HexNAc4Hex4Fuc1, HexNAc4Hex5Fuc1, and HexNAc4Hex5Fuc1Sia1). Glycosylation on Asn-227 is required for interaction with Fc receptors and ability to activate the complement pathway. Post-translationally, (Microbial infection) Deglycosylation on Asn-227 by S.pyogenes EndoS or Endos2 endoglucosidases prevents interaction between immunoglobulin-gamma (IgG) and Fc receptors, impairing ability to activate the complement pathway. In terms of processing, O-linked glycans are non-, mono- and disialylated core 1-type O-glycans.

Its subcellular location is the secreted. The protein resides in the cell membrane. Its function is as follows. Constant region of immunoglobulin heavy chains. Immunoglobulins, also known as antibodies, are membrane-bound or secreted glycoproteins produced by B lymphocytes. In the recognition phase of humoral immunity, the membrane-bound immunoglobulins serve as receptors which, upon binding of a specific antigen, trigger the clonal expansion and differentiation of B lymphocytes into immunoglobulins-secreting plasma cells. Secreted immunoglobulins mediate the effector phase of humoral immunity, which results in the elimination of bound antigens. The antigen binding site is formed by the variable domain of one heavy chain, together with that of its associated light chain. Thus, each immunoglobulin has two antigen binding sites with remarkable affinity for a particular antigen. The variable domains are assembled by a process called V-(D)-J rearrangement and can then be subjected to somatic hypermutations which, after exposure to antigen and selection, allow affinity maturation for a particular antigen. This is Immunoglobulin heavy constant gamma 3 from Homo sapiens (Human).